Reading from the N-terminus, the 26-residue chain is Mucus envelope protein (26 aa).

Glycosylated. In terms of tissue distribution, produced by the opercular gland in the gill cavity and secreted as part of the mucus cocoon.

The protein localises to the secreted. Functionally, exhibits antibacterial activity. May play a role in protection against parasite settlement. This chain is Mucus envelope protein, found in Scarus vetula (Queen parrotfish).